We begin with the raw amino-acid sequence, 302 residues long: Myeloid-associated differentiation marker-like protein 2 (302 aa).

MARVEL domains are found at residues 13-149 (AIWS…AKPG) and 154-298 (YMAT…RLRI). 7 consecutive transmembrane segments (helical) span residues 45 to 65 (AYGTFCVFVWAFCFALTILIV), 87 to 107 (AYAMLATLMTLTAAVIYPMYF), 124 to 144 (LAVSVCAALLFVTYAVEVFLT), 158 to 178 (ASGLLKVVQAFVACVIFGALA), 191 to 211 (WCVAVYSFCFGVTMVVVILNI), 225 to 245 (FVVIYTVLAILMYISAAVIWP), and 273 to 293 (LAVTIFTHINLILYIADLIYT).

This sequence belongs to the MAL family.

The protein resides in the membrane. This Xenopus laevis (African clawed frog) protein is Myeloid-associated differentiation marker-like protein 2 (myadml2).